A 495-amino-acid chain; its full sequence is Potassium voltage-gated channel subfamily A member 1 (495 aa).

The interval 1–30 (MTVMSGENADEASTAPGHPQDGSYPRQADH) is disordered. The tract at residues 1 to 128 (MTVMSGENAD…FYELGEEAME (128 aa)) is tetramerization domain. The Cytoplasmic portion of the chain corresponds to 1-164 (MTVMSGENAD…LLFEYPESSG (164 aa)). The residue at position 23 (Ser-23) is a Phosphoserine. The helical transmembrane segment at 165-186 (PARVIAIVSVMVILISIVIFCL) threads the bilayer. The Extracellular portion of the chain corresponds to 187-220 (ETLPELKDDKDFTGTIHRIDNTTVIYTSNIFTDP). A glycan (N-linked (GlcNAc...) asparagine) is linked at Asn-207. A helical transmembrane segment spans residues 221 to 242 (FFIVETLCIIWFSFELVVRFFA). Residue Cys-243 is the site of S-palmitoyl cysteine attachment. Topologically, residues 243-253 (CPSKTDFFKNI) are cytoplasmic. The helical transmembrane segment at 254 to 274 (MNFIDIVAIIPYFITLGTEIA) threads the bilayer. Topologically, residues 275–287 (EQEGNQKGEQATS) are extracellular. Residues 288-308 (LAILRVIRLVRVFRIFKLSRH) form a helical; Voltage-sensor membrane-spanning segment. Over 309-323 (SKGLQILGQTLKASM) the chain is Cytoplasmic. Residues 310 to 323 (KGLQILGQTLKASM) are S4-S5 linker. Ser-322 is subject to Phosphoserine; by PKA. The helical transmembrane segment at 324 to 345 (RELGLLIFFLFIGVILFSSAVY) threads the bilayer. Residues 346–359 (FAEAEEAESHFSSI) are Extracellular-facing. The helical intramembrane region spans 360 to 371 (PDAFWWAVVSMT). Positions 372–377 (TVGYGD) match the Selectivity filter motif. An intramembrane segment occupies 372–379 (TVGYGDMY). Residues 380–386 (PVTIGGK) are Extracellular-facing. The helical transmembrane segment at 387–415 (IVGSLCAIAGVLTIALPVPVIVSNFNYFY) threads the bilayer. Residues 416 to 495 (HRETEGEEQA…VNKSKLLTDV (80 aa)) are Cytoplasmic-facing. Phosphoserine is present on residues Ser-437 and Ser-439. At Ser-446 the chain carries Phosphoserine; by PKA. A PDZ-binding motif is present at residues 493–495 (TDV).

It belongs to the potassium channel family. A (Shaker) (TC 1.A.1.2) subfamily. Kv1.1/KCNA1 sub-subfamily. Homotetramer and heterotetramer with other channel-forming alpha subunits, such as KCNA2, KCNA4, KCNA5, KCNA6 and KCNA7. Channel activity is regulated by interaction with the beta subunits KCNAB1 and KCNAB2. Identified in a complex with KCNA2 and KCNAB2. Interacts (via C-terminus) with the PDZ domains of DLG1, DLG2 and DLG4. Interacts with LGI1 within a complex containing LGI1, KCNA4 and KCNAB1. Interacts (via N-terminus) with STX1A; this promotes channel inactivation. Interacts (via N-terminus) with the heterodimer formed by GNB1 and GNG2; this promotes channel inactivation. Can interact simultaneously with STX1A and the heterodimer formed by GNB1 and GNG2. Interacts (via cytoplasmic N-terminal domain) with KCNRG; this inhibits channel activity. Interacts with ANK3; this inhibits channel activity. Interacts with ADAM11. In terms of processing, N-glycosylated. Palmitoylated on Cys-243; which may be required for membrane targeting. Post-translationally, phosphorylated on tyrosine residues. Phosphorylation increases in response to NRG1; this inhibits channel activity. Phosphorylation at Ser-446 regulates channel activity by down-regulating expression at the cell membrane. Detected in brain. Expressed in cerebellar cortex basket cell terminals, the area surround the Purkinje cell soma, and the pinceaux expansions encircling the axon initial segment (at protein level). Detected in the juxtaparanodal regions of the nodes of Ranvier in myelinated axons. Detected in the paranodal region in sciatic nerve. Detected on cell bodies in cerebellum, dorsal and ventral cochlear nucleus, pontine reticular nucleus, mesencephalic trigeminal nucleus, motor trigeminal nucleus and the pricipal sensory trigeminal nucleus. Detected in terminal fields of basket cells in the cerebellum corpus medullare. Detected in hippocampus CA3 pyramidal neurons and in the hilus and stratum moleculare of the dentate gyrus. Detected in the central nucleus and the external nucleus of the inferior colliculus. Detected in fiber tracts in the optic tract, external medullary lamina, stria terminalis, medulla, ventral pallidum and substantia nigra. Detected in neurons from dorsal root ganglion. Detected in neurons in the medial nucleus of the trapezoid body. Detected in midbrain dopamine neuron axon terminals. Detected in brain cortex. Detected in brainstem. Detected in juxtaparanodal regions of the nodes of Ranvier in the vagus nerve, but only at very low levels in the heart. Detected in the islet of Langerhans. Detected at the luminal membrane in distal convoluted tubules in the kidney (at protein level). Detected in hippocampus, thalamus, neocortex and ventral brain cortex, including the piriform and entorhinal cortex and the amygdala. Detected in midbrain dopamine neurons. Detected in heart atrium, ventricle, sinoatrial node and atrioventricular node.

The protein localises to the cell membrane. It localises to the cell projection. Its subcellular location is the axon. The protein resides in the membrane. It is found in the perikaryon. The protein localises to the dendrite. It localises to the cell junction. Its subcellular location is the synapse. The protein resides in the cytoplasmic vesicle. It is found in the endoplasmic reticulum. The protein localises to the presynaptic cell membrane. It localises to the presynapse. It carries out the reaction K(+)(in) = K(+)(out). Its activity is regulated as follows. Inhibited by 4-aminopyridine (4-AP), tetraethylammonium (TEA) and dendrotoxin (DTX), but not by charybdotoxin (CTX). Voltage-gated potassium channel that mediates transmembrane potassium transport in excitable membranes, primarily in the brain and the central nervous system, but also in the kidney. Contributes to the regulation of the membrane potential and nerve signaling, and prevents neuronal hyperexcitability. Forms tetrameric potassium-selective channels through which potassium ions pass in accordance with their electrochemical gradient. The channel alternates between opened and closed conformations in response to the voltage difference across the membrane. Can form functional homotetrameric channels and heterotetrameric channels that contain variable proportions of KCNA1, KCNA2, KCNA4, KCNA5, KCNA6, KCNA7, and possibly other family members as well; channel properties depend on the type of alpha subunits that are part of the channel. Channel properties are modulated by cytoplasmic beta subunits that regulate the subcellular location of the alpha subunits and promote rapid inactivation of delayed rectifier potassium channels. In vivo, membranes probably contain a mixture of heteromeric potassium channel complexes, making it difficult to assign currents observed in intact tissues to any particular potassium channel family member. Homotetrameric KCNA1 forms a delayed-rectifier potassium channel that opens in response to membrane depolarization, followed by slow spontaneous channel closure. In contrast, a heterotetrameric channel formed by KCNA1 and KCNA4 shows rapid inactivation. Regulates neuronal excitability in hippocampus, especially in mossy fibers and medial perforant path axons, preventing neuronal hyperexcitability. May function as down-stream effector for G protein-coupled receptors and inhibit GABAergic inputs to basolateral amygdala neurons. May contribute to the regulation of neurotransmitter release, such as gamma-aminobutyric acid (GABA) release. Plays a role in regulating the generation of action potentials and preventing hyperexcitability in myelinated axons of the vagus nerve, and thereby contributes to the regulation of heart contraction. Required for normal neuromuscular responses. Regulates the frequency of neuronal action potential firing in response to mechanical stimuli, and plays a role in the perception of pain caused by mechanical stimuli, but does not play a role in the perception of pain due to heat stimuli. Required for normal responses to auditory stimuli and precise location of sound sources, but not for sound perception. The use of toxins that block specific channels suggest that it contributes to the regulation of the axonal release of the neurotransmitter dopamine. Required for normal postnatal brain development and normal proliferation of neuronal precursor cells in the brain. Plays a role in the reabsorption of Mg(2+) in the distal convoluted tubules in the kidney and in magnesium ion homeostasis, probably via its effect on the membrane potential. The protein is Potassium voltage-gated channel subfamily A member 1 of Mus musculus (Mouse).